A 494-amino-acid polypeptide reads, in one-letter code: Alpha-amylase A (494 aa).

A signal peptide spans 1 to 18; that stretch reads MFLAKSLVCLALLAVANA. Gln-19 carries the pyrrolidone carboxylic acid modification. A disulfide bridge links Cys-46 with Cys-102. Positions 116, 165, and 174 each coordinate Ca(2+). An intrachain disulfide couples Cys-153 to Cys-167. Position 202 (Arg-202) interacts with chloride. The Nucleophile role is filled by Asp-204. His-208 contacts Ca(2+). The active-site Proton donor is Glu-241. Chloride-binding residues include Asn-304 and Arg-343. 2 disulfide bridges follow: Cys-376-Cys-382 and Cys-448-Cys-460.

It belongs to the glycosyl hydrolase 13 family. In terms of assembly, monomer. Ca(2+) is required as a cofactor. The cofactor is chloride.

The catalysed reaction is Endohydrolysis of (1-&gt;4)-alpha-D-glucosidic linkages in polysaccharides containing three or more (1-&gt;4)-alpha-linked D-glucose units.. The protein is Alpha-amylase A (Amy-d) of Drosophila mauritiana (Fruit fly).